The following is a 65-amino-acid chain: Cytochrome b-c1 complex subunit 9, mitochondrial (65 aa).

The helical transmembrane segment at 14–34 (IYVATIFGGAFAFQGFFDVAV) threads the bilayer.

This sequence belongs to the UQCR10/QCR9 family. In terms of assembly, component of the ubiquinol-cytochrome c oxidoreductase (cytochrome b-c1 complex, complex III, CIII), a multisubunit enzyme composed of 10 subunits. The complex is composed of 3 respiratory subunits cytochrome b (COB), cytochrome c1 (CYT1) and Rieske protein (RIP1), 2 core protein subunits COR1 and QCR2, and 5 low-molecular weight protein subunits QCR6, QCR7, QCR8, QCR9 and QCR10. The complex exists as an obligatory dimer and forms supercomplexes (SCs) in the inner mitochondrial membrane with a monomer or a dimer of cytochrome c oxidase (complex IV, CIV), resulting in 2 different assemblies (supercomplexes III(2)IV and III(2)IV(2)).

Its subcellular location is the membrane. The protein resides in the mitochondrion inner membrane. Component of the ubiquinol-cytochrome c oxidoreductase, a multisubunit transmembrane complex that is part of the mitochondrial electron transport chain which drives oxidative phosphorylation. The complex plays an important role in the uptake of multiple carbon sources present in different host niches. This is Cytochrome b-c1 complex subunit 9, mitochondrial from Candida albicans (strain SC5314 / ATCC MYA-2876) (Yeast).